A 276-amino-acid polypeptide reads, in one-letter code: Small ribosomal subunit protein uS3 (276 aa).

Residues 39–110 (IRRETMKFFK…KINIKIKEIK (72 aa)) form the KH type-2 domain. A disordered region spans residues 218–243 (DAGQVINRKSSREKSEHFDRSRVDDR). The span at 227–243 (SSREKSEHFDRSRVDDR) shows a compositional bias: basic and acidic residues.

It belongs to the universal ribosomal protein uS3 family. Part of the 30S ribosomal subunit. Forms a tight complex with proteins S10 and S14.

Functionally, binds the lower part of the 30S subunit head. Binds mRNA in the 70S ribosome, positioning it for translation. The sequence is that of Small ribosomal subunit protein uS3 from Borrelia hermsii (strain HS1 / DAH).